Here is a 501-residue protein sequence, read N- to C-terminus: MKRLLPFLTDLEAWVEQLIPLKQMTLDSRQVTEGDLFIALKGHQCDGRQFIQNAIEQGAAIILAEAESDQDEIELDSQFARYNLDRRACKVITVPRLAERLSAIADSFYASPSAKLKLIGITGTNGKTTTAQLLAQWHNLLGGHSAVMGTIGNGLYGQEQEAINTTGSAIEVQQNLARFVEQGADFCAMEVSSHGLAQYRVEALQYDLAIFTNLSRDHLDYHHSIAAYEAAKFRLFNALQTKAQVLNADDQVAQNWLSMLPNAVLVSCDPNFTSEHQFVKATKVNFSLQGAYIEFESSWGNGQFHSQLSGAFNVTNILLALAGLLTLGYDLAKLVATASQLRSVTGRMQKVSAITDKNRPLVLVDYAHTPDALQKALQAARLHTKGKLFCVFGCGGDRDCGKRPLMATIAEELADGVIVTNDNPRTEDQHKIVAEIMQGFAKPDNILVIYDREQAIQHAIKHASSADLILIAGKGHENYQIIGTIKHHFSDQEIASKYLSQ.

UDP-N-acetyl-alpha-D-muramoyl-L-alanyl-D-glutamate is bound by residues leucine 26, serine 28, and 43-45 (HQC). 123–129 (GTNGKTT) contacts ATP. Residues asparagine 164, 165 to 166 (TT), serine 192, glutamine 198, and arginine 200 contribute to the UDP-N-acetyl-alpha-D-muramoyl-L-alanyl-D-glutamate site. N6-carboxylysine is present on lysine 232. Meso-2,6-diaminopimelate-binding positions include arginine 398, 422 to 425 (DNPR), glycine 473, and glutamate 477. Positions 422-425 (DNPR) match the Meso-diaminopimelate recognition motif motif.

The protein belongs to the MurCDEF family. MurE subfamily. It depends on Mg(2+) as a cofactor. In terms of processing, carboxylation is probably crucial for Mg(2+) binding and, consequently, for the gamma-phosphate positioning of ATP.

Its subcellular location is the cytoplasm. The enzyme catalyses UDP-N-acetyl-alpha-D-muramoyl-L-alanyl-D-glutamate + meso-2,6-diaminopimelate + ATP = UDP-N-acetyl-alpha-D-muramoyl-L-alanyl-gamma-D-glutamyl-meso-2,6-diaminopimelate + ADP + phosphate + H(+). It participates in cell wall biogenesis; peptidoglycan biosynthesis. Functionally, catalyzes the addition of meso-diaminopimelic acid to the nucleotide precursor UDP-N-acetylmuramoyl-L-alanyl-D-glutamate (UMAG) in the biosynthesis of bacterial cell-wall peptidoglycan. This Haemophilus ducreyi (strain 35000HP / ATCC 700724) protein is UDP-N-acetylmuramoyl-L-alanyl-D-glutamate--2,6-diaminopimelate ligase.